A 282-amino-acid chain; its full sequence is NADPH-dependent 7-cyano-7-deazaguanine reductase (282 aa).

Residue 88-90 (IES) coordinates substrate. 90–91 (SK) lines the NADPH pocket. C190 acts as the Thioimide intermediate in catalysis. D197 functions as the Proton donor in the catalytic mechanism. 229–230 (HE) serves as a coordination point for substrate. 258-259 (RG) is a binding site for NADPH.

This sequence belongs to the GTP cyclohydrolase I family. QueF type 2 subfamily. In terms of assembly, homodimer.

It localises to the cytoplasm. The enzyme catalyses 7-aminomethyl-7-carbaguanine + 2 NADP(+) = 7-cyano-7-deazaguanine + 2 NADPH + 3 H(+). It participates in tRNA modification; tRNA-queuosine biosynthesis. Functionally, catalyzes the NADPH-dependent reduction of 7-cyano-7-deazaguanine (preQ0) to 7-aminomethyl-7-deazaguanine (preQ1). In Escherichia coli (strain UTI89 / UPEC), this protein is NADPH-dependent 7-cyano-7-deazaguanine reductase.